The primary structure comprises 482 residues: Putative metabolite transport protein YfiG (482 aa).

Residues 1-29 lie on the Cytoplasmic side of the membrane; it reads MSTKKKEAVIGKESLAHKGLLRTITLVST. The chain crosses the membrane as a helical span at residues 30 to 50; the sequence is FGGLLFGYDTGVINGALPFMA. Residues 51 to 59 lie on the Extracellular side of the membrane; sequence TAGQLNLTP. Residues 60–80 form a helical membrane-spanning segment; that stretch reads VTEGLVASSLLLGAAFGAMFG. Residues 81–92 are Cytoplasmic-facing; it reads GRLSDRHGRRKT. A helical membrane pass occupies residues 93 to 113; the sequence is ILYLALLFIAATLGCTFSPNA. The Extracellular segment spans residues 114–120; the sequence is SVMIAFR. Residues 121 to 141 traverse the membrane as a helical segment; it reads FLLGLAVGCASVTVPTFLAEI. At 142 to 155 the chain is on the cytoplasmic side; sequence SPAERRGRIVTQNE. The helical transmembrane segment at 156–176 threads the bilayer; it reads LMIVIGQLLAYTFNAIIGSTM. The Extracellular portion of the chain corresponds to 177–184; it reads GESANVWR. The chain crosses the membrane as a helical span at residues 185-205; that stretch reads YMLVIATLPAVVLWFGMLIVP. The Cytoplasmic segment spans residues 206–263; that stretch reads ESPRWLAAKGRMGDALRVLRQIREDSQAQQEIKEIKHAIEGTAKKAGFHDFQEPWIRR. Residues 264–284 form a helical membrane-spanning segment; it reads ILFIGIGIAIVQQITGVNSIM. The Extracellular segment spans residues 285–301; sequence YYGTEILREAGFQTEAA. A helical transmembrane segment spans residues 302–322; it reads LIGNIANGVISVIAVIFGIWL. The Cytoplasmic portion of the chain corresponds to 323–331; the sequence is LGKVRRRPM. The next 2 helical transmembrane spans lie at 332 to 352 and 353 to 373; these read LIIG…LSIV and LEGT…FLAF. Topologically, residues 374–400 are cytoplasmic; the sequence is QQTAISTVTWLMLSEIFPMHVRGLGMG. A helical membrane pass occupies residues 401–421; sequence ISTFCLWTANFLIGFTFPILL. At 422 to 423 the chain is on the extracellular side; the sequence is NH. Residues 424-444 form a helical membrane-spanning segment; it reads IGMSATFFIFVAMNILAILFV. The Cytoplasmic segment spans residues 445–482; it reads KKYVPETKGRSLEQLEHSFRQYGRRADQEIQNQTTHLS.

It belongs to the major facilitator superfamily. Sugar transporter (TC 2.A.1.1) family.

Its subcellular location is the cell membrane. This chain is Putative metabolite transport protein YfiG (yfiG), found in Bacillus subtilis (strain 168).